The following is a 539-amino-acid chain: RING finger protein 37 (539 aa).

The interval 226-249 (PALPMESDCDPGGQSESQHSPCTL) is disordered. Residues 239–249 (QSESQHSPCTL) show a composition bias toward polar residues. The U-box domain occupies 258–338 (DVPEEFLDPI…DRFLLQHSIS (81 aa)). Disordered regions lie at residues 359 to 399 (LPSR…EPTA) and 456 to 479 (GTRG…VSGP). The span at 374–395 (HYSLGMSASSSATSPLFSPTTS) shows a compositional bias: low complexity. The RING-type zinc-finger motif lies at 481-526 (CASCKQAFSSYSTNEPVYQLPCGHLLCRPCLSEKQRSQPMMCTACR).

In terms of assembly, interacts with UBE2L3. Interacts with VCP. As to expression, expressed in testis and placenta.

It localises to the nucleus. It carries out the reaction S-ubiquitinyl-[E2 ubiquitin-conjugating enzyme]-L-cysteine + [acceptor protein]-L-lysine = [E2 ubiquitin-conjugating enzyme]-L-cysteine + N(6)-ubiquitinyl-[acceptor protein]-L-lysine.. It participates in protein modification; protein ubiquitination. Its function is as follows. May have a ubiquitin-protein ligase activity acting as an E3 ubiquitin-protein ligase or as a ubiquitin-ubiquitin ligase promoting elongation of ubiquitin chains on substrates. This Mus musculus (Mouse) protein is RING finger protein 37 (Ubox5).